The following is a 533-amino-acid chain: AAA-ATPase At5g17740 (533 aa).

A helical transmembrane segment spans residues 11–27; the sequence is ASMFSTYASMMGYVMII. 252-259 is an ATP binding site; that stretch reads GPPGTGKS.

The protein belongs to the AAA ATPase family. BCS1 subfamily. It depends on Mg(2+) as a cofactor.

It is found in the membrane. It catalyses the reaction ATP + H2O = ADP + phosphate + H(+). The sequence is that of AAA-ATPase At5g17740 from Arabidopsis thaliana (Mouse-ear cress).